The sequence spans 735 residues: Catalase-peroxidase (735 aa).

Residues 95–223 (WHSAGTYRTG…LAAVQMGLIY (129 aa)) constitute a cross-link (tryptophyl-tyrosyl-methioninium (Trp-Tyr) (with M-249)). Catalysis depends on His96, which acts as the Proton acceptor. Residues 223–249 (YVNPEGPDGVPDPIKSGIDIRETFARM) constitute a cross-link (tryptophyl-tyrosyl-methioninium (Tyr-Met) (with W-95)). His264 contributes to the heme b binding site.

The protein belongs to the peroxidase family. Peroxidase/catalase subfamily. In terms of assembly, homodimer or homotetramer. The cofactor is heme b. Formation of the three residue Trp-Tyr-Met cross-link is important for the catalase, but not the peroxidase activity of the enzyme.

It carries out the reaction H2O2 + AH2 = A + 2 H2O. The catalysed reaction is 2 H2O2 = O2 + 2 H2O. Functionally, bifunctional enzyme with both catalase and broad-spectrum peroxidase activity. The chain is Catalase-peroxidase from Aliarcobacter butzleri (strain RM4018) (Arcobacter butzleri).